The chain runs to 667 residues: Small ribosomal subunit protein mS39 (667 aa).

A mitochondrion-targeting transit peptide spans 1 to 11; that stretch reads MASSCSQALRH. Positions 199–226 are disordered; that stretch reads EAEQRSEEMEDIQDETQTKKGRSPKASD. PPR repeat units lie at residues 249-283, 284-323, 324-360, 361-400, 482-516, and 565-599; these read NTRS…RLKA, DVHI…KVKP, NLLT…SIEP, SLAS…SFTP, SSNA…GHGN, and TASS…NRVP.

The protein belongs to the mitochondrion-specific ribosomal protein mS39 family.

Its subcellular location is the mitochondrion. Functionally, mitochondrial RNA-binding protein that may have a role in mitochondrial translation. In Danio rerio (Zebrafish), this protein is Small ribosomal subunit protein mS39 (ptcd3).